The sequence spans 311 residues: MKVTIVGAGNVGATCADVISYRGIASEVVLLDIKEGFAEGKALDIMQCATNTGFNTKVSGVTNDYSKTAGSDVVVITSGIPRKPGMTREELIGINAGIVKTVAENVLKHSPNTIIVVVSNPMDTMTYLALKATGVPKNRIIGMGGALDSSRFRTYLSLALDKPANDISAMVIGGHGDTTMIPLTRLASYNGIPVTEFLSEEVLQKVAADTMVGGATLTGLLGTSAWYAPGASVAYLVDSILNDQKKMIACSVFVEGEYGQNDICIGVPCIIGKNGVEEILDIKLNDQEKALFAKSADAVRGMNDALKSILV.

Residues 7–12 (GAGNVG) and Asp32 contribute to the NAD(+) site. The substrate site is built by Arg82 and Arg88. Residues Asn95 and 118-120 (VSN) contribute to the NAD(+) site. Substrate contacts are provided by Asn120 and Arg151. Catalysis depends on His175, which acts as the Proton acceptor.

Belongs to the LDH/MDH superfamily. MDH type 3 family. Homotetramer.

It catalyses the reaction (S)-malate + NAD(+) = oxaloacetate + NADH + H(+). With respect to regulation, strongly inhibited by iodoacetic acid and CuCl(2). Completely inhibited by N-ethylmaleimide and HgCl(2). Functionally, catalyzes the reversible oxidation of malate to oxaloacetate. Can use both NAD and NADP for malate oxidation, but NADPH cannot be used for oxaloacetate reduction. The sequence is that of Malate dehydrogenase from Flavobacterium frigidimaris.